Reading from the N-terminus, the 171-residue chain is Ly6/PLAUR domain-containing protein 6 (171 aa).

Positions Met-1–Ser-25 are cleaved as a signal peptide. The 95-residue stretch at Phe-47–Ala-141 folds into the UPAR/Ly6 domain. Intrachain disulfides connect Cys-49–Cys-77, Cys-52–Cys-61, Cys-70–Cys-96, Cys-102–Cys-121, Cys-107–Cys-118, and Cys-122–Cys-127. The short motif at Asn-88 to Ile-90 is the NxI motif element. 2 N-linked (GlcNAc...) asparagine glycosylation sites follow: Asn-134 and Asn-147. Asn-147 carries the GPI-anchor amidated asparagine lipid modification. Positions Gln-148 to Leu-171 are cleaved as a propeptide — removed in mature form.

Interacts with nicotinic acetylcholine receptors (nAChRs) including CHRNA3, CHRNA4, CHRNA5, CHRNA6, CHRNA7, CHRNB2 and CHRNB4. Interacts (via NxI motif) with LRP6. Detected in the frontal cortex and hippocampus (at protein level). Highly expressed in the brain and spinal cord, as well as dorsal root and trigeminal ganglia.

It is found in the secreted. The protein resides in the cytoplasm. The protein localises to the cell membrane. It localises to the synapse. Its subcellular location is the synaptosome. It is found in the membrane raft. The protein resides in the cell projection. The protein localises to the dendrite. It localises to the perikaryon. Functionally, acts as a modulator of nicotinic acetylcholine receptors (nAChRs) function in the brain. Inhibits nicotine-induced Ca(2+) influx through nAChRs. In vitro, specifically inhibits alpha-3:beta-4 and alpha-7 nAChR currents in an allosteric manner. Acts as a positive regulator of Wnt/beta-catenin signaling. This is Ly6/PLAUR domain-containing protein 6 (Lypd6) from Mus musculus (Mouse).